We begin with the raw amino-acid sequence, 416 residues long: Transmembrane protease serine 11B (416 aa).

Residues 1-17 (MYRHGISSQRSWPLWTT) lie on the Cytoplasmic side of the membrane. Residues 18-38 (IFIFLGVAAILGVTIGLLVHF) form a helical; Signal-anchor for type II membrane protein membrane-spanning segment. Residues 39–416 (LAVEKTYYYQ…RNWITSKTGL (378 aa)) lie on the Extracellular side of the membrane. Residues 43–160 (KTYYYQGDFH…ASIKLMEISK (118 aa)) enclose the SEA domain. Asn-72 and Asn-107 each carry an N-linked (GlcNAc...) asparagine glycan. The region spanning 185–415 (IVNGKSSLEG…YRNWITSKTG (231 aa)) is the Peptidase S1 domain. Cys-210 and Cys-226 are disulfide-bonded. Catalysis depends on charge relay system residues His-225 and Asp-270. N-linked (GlcNAc...) asparagine glycosylation is present at Asn-315. Disulfide bonds link Cys-335/Cys-351 and Cys-362/Cys-391. The Charge relay system role is filled by Ser-366.

The protein belongs to the peptidase S1 family.

It localises to the cell membrane. With respect to regulation, inhibited by aprotinin, leupeptin, benzamidine, SERPINA1, SPINT1 and SPINT2. Functionally, serine protease. The polypeptide is Transmembrane protease serine 11B (TMPRSS11B) (Homo sapiens (Human)).